The chain runs to 590 residues: MIPSDFIDELLAKTDIVDIIDEQVPLKKGGANYMACCPFHKEKTPSFSVSPTKQFYHCFSCGAHGSAIGFVMEHQGLSFPEAVQFLADRVGMVVPKVHGQNDNPEVRAERKKKQQTLEETTAAAADFYAQQLKFNPAAKAYLDKRGLSAEVIAHYGLGYAPDGWQPLTQVFQPYPNTALVDTGMVIDNEGRHYDRFRHRIMFPIRNPRGQVIGFGGRVLDDSKPKYLNSPDTPLFDKGKNLYGLYEGRAAVKEAGRILVVEGYMDVVALAQFGVGYGVAALGTATTAEHVKILMRQADSIYFCFDGDSAGRKAAWRALENALPQLKDDKSLHFLFLPEEHDPDSYIRAYGKAQFEDALLNQSKPLSEYFWEHLSDGIHLNTQEGKAELVKTSSPLLAQITAPALAYLLKQRLSELVGIDPDNLAQLLGQEAPKRHVKQKNYKLPPISVKQPVMLTLVQRQIRSLLINPDWAAYIDLPDYLALDGDFACLANLAESIKNHAAVPETAQVLEYMRGSPYEETITRIFHSTHQSEEMNSSSEEDCENFQIGMKKLLNELKYSQIETLKQKSLQSGLNESEKKLLLSLLTAKQN.

A CHC2-type zinc finger spans residues 37 to 61 (CPFHKEKTPSFSVSPTKQFYHCFSC). Residues 255–337 (GRILVVEGYM…DKSLHFLFLP (83 aa)) enclose the Toprim domain. Mg(2+) is bound by residues Glu261, Asp305, and Asp307.

The protein belongs to the DnaG primase family. In terms of assembly, monomer. Interacts with DnaB. Zn(2+) is required as a cofactor. It depends on Mg(2+) as a cofactor.

It carries out the reaction ssDNA + n NTP = ssDNA/pppN(pN)n-1 hybrid + (n-1) diphosphate.. In terms of biological role, RNA polymerase that catalyzes the synthesis of short RNA molecules used as primers for DNA polymerase during DNA replication. This is DNA primase from Neisseria meningitidis serogroup B (strain ATCC BAA-335 / MC58).